The chain runs to 290 residues: 33 kDa chaperonin (290 aa).

Disulfide bonds link C235–C237 and C268–C271.

This sequence belongs to the HSP33 family. Post-translationally, under oxidizing conditions two disulfide bonds are formed involving the reactive cysteines. Under reducing conditions zinc is bound to the reactive cysteines and the protein is inactive.

It is found in the cytoplasm. In terms of biological role, redox regulated molecular chaperone. Protects both thermally unfolding and oxidatively damaged proteins from irreversible aggregation. Plays an important role in the bacterial defense system toward oxidative stress. This Streptococcus pyogenes serotype M6 (strain ATCC BAA-946 / MGAS10394) protein is 33 kDa chaperonin.